The primary structure comprises 494 residues: ATP synthase subunit beta, chloroplastic (494 aa).

172–179 (GGAGVGKT) is a binding site for ATP.

It belongs to the ATPase alpha/beta chains family. In terms of assembly, F-type ATPases have 2 components, CF(1) - the catalytic core - and CF(0) - the membrane proton channel. CF(1) has five subunits: alpha(3), beta(3), gamma(1), delta(1), epsilon(1). CF(0) has four main subunits: a(1), b(1), b'(1) and c(9-12).

It is found in the plastid. It localises to the chloroplast thylakoid membrane. The enzyme catalyses ATP + H2O + 4 H(+)(in) = ADP + phosphate + 5 H(+)(out). Functionally, produces ATP from ADP in the presence of a proton gradient across the membrane. The catalytic sites are hosted primarily by the beta subunits. The chain is ATP synthase subunit beta, chloroplastic from Physcomitrium patens (Spreading-leaved earth moss).